Here is a 247-residue protein sequence, read N- to C-terminus: Small ribosomal subunit protein uS2 (247 aa).

The protein belongs to the universal ribosomal protein uS2 family.

This chain is Small ribosomal subunit protein uS2, found in Ectopseudomonas mendocina (strain ymp) (Pseudomonas mendocina).